The following is a 1445-amino-acid chain: MQGPPLLTAAHLLCVCTAALAVAPGPRFLVTAPGIIRPGGNVTIGVELLEHCPSQVTVKAELLKTASNLTVSVLEAEGVFEKGSFKTLTLPSLPLNSADEIYELRVTGRTQDEILFSNSTRLSFETKRISVFIQTDKALYKPKQEVKFRIVTLFSDFKPYKTSLNILIKDPKSNLIQQWLSQQSDLGVISKTFQLSSHPILGDWSIQVQVNDQTYYQSFQVSEYVLPKFEVTLQTPLYCSMNSKHLNGTITAKYTYGKPVKGDVTLTFLPLSFWGKKKNITKTFKINGSANFSFNDEEMKNVMDSSNGLSEYLDLSSPGPVEILTTVTESVTGISRNVSTNVFFKQHDYIIEFFDYTTVLKPSLNFTATVKVTRADGNQLTLEERRNNVVITVTQRNYTEYWSGSNSGNQKMEAVQKINYTVPQSGTFKIEFPILEDSSELQLKAYFLGSKSSMAVHSLFKSPSKTYIQLKTRDENIKVGSPFELVVSGNKRLKELSYMVVSRGQLVAVGKQNSTMFSLTPENSWTPKACVIVYYIEDDGEIISDVLKIPVQLVFKNKIKLYWSKVKAEPSEKVSLRISVTQPDSIVGIVAVDKSVNLMNASNDITMENVVHELELYNTGYYLGMFMNSFAVFQECGLWVLTDANLTKDYIDGVYDNAEYAERFMEENEGHIVDIHDFSLGSSPHVRKHFPETWIWLDTNMGYRIYQEFEVTVPDSITSWVATGFVISEDLGLGLTTTPVELQAFQPFFIFLNLPYSVIRGEEFALEITIFNYLKDATEVKVIIEKSDKFDILMTSNEINATGHQQTLLVPSEDGATVLFPIRPTHLGEIPITVTALSPTASDAVTQMILVKAEGIEKSYSQSILLDLTDNRLQSTLKTLSFSFPPNTVTGSERVQITAIGDVLGPSINGLASLIRMPYGCGEQNMINFAPNIYILDYLTKKKQLTDNLKEKALSFMRQGYQRELLYQREDGSFSAFGNYDPSGSTWLSAFVLRCFLEADPYIDIDQNVLHRTYTWLKGHQKSNGEFWDPGRVIHSELQGGNKSPVTLTAYIVTSLLGYRKYQPNIDVQESIHFLESEFSRGISDNYTLALITYALSSVGSPKAKEALNMLTWRAEQEGGMQFWVSSESKLSDSWQPRSLDIEVAAYALLSHFLQFQTSEGIPIMRWLSRQRNSLGGFASTQDTTVALKALSEFAALMNTERTNIQVTVTGPSSPSPVKFLIDTHNRLLLQTAELAVVQPTAVNISANGFGFAICQLNVVYNVKASGSSRRRRSIQNQEAFDLDVAVKENKDDLNHVDLNVCTSFSGPGRSGMALMEVNLLSGFMVPSEAISLSETVKKVEYDHGKLNLYLDSVNETQFCVNIPAVRNFKVSNTQDASVSIVDYYEPRRQAVRSYNSEVKLSSCDLCSDVQGCRPCEDGASGSHHHSSVIFIFCFKLLYFMELWL.

Positions 1–21 (MQGPPLLTAAHLLCVCTAALA) are cleaved as a signal peptide. N-linked (GlcNAc...) asparagine glycosylation is found at Asn68, Asn118, Asn247, Asn279, Asn365, Asn419, Asn513, and Asn645. The bait region (approximate) stretch occupies residues 593–702 (DKSVNLMNAS…TWIWLDTNMG (110 aa)). Residues 921-924 (CGEQ) constitute a cross-link (isoglutamyl cysteine thioester (Cys-Gln)). Residues Asn1086 and Asn1355 are each glycosylated (N-linked (GlcNAc...) asparagine). Ala1420 carries GPI-anchor amidated alanine lipidation. The propeptide at 1421 to 1445 (SGSHHHSSVIFIFCFKLLYFMELWL) is removed in mature form.

This sequence belongs to the protease inhibitor I39 (alpha-2-macroglobulin) family. As to quaternary structure, heterodimer; disulfide-linked. Interacts with TGFB1 and TGFBR1. Forms a heteromeric complex with TGFBR1, TGFBR2 and TGFBR3 in a ligand-independent manner. Post-translationally, N-glycosylated. 2 forms of 150 (p150) and 120 kDa (p120) exist due to proteolytic degradation from a 180 kDa form. As to expression, widely expressed with high level in uterus, aorta, heart, lung, trachea, placenta and in fetal heart, kidney, liver, spleen and lung. Expressed by CD34(+) acute myeloid leukemia cell lines, T-cell lines, activated T-lymphoblasts, endothelial cells and activated platelets. Isoform 4 is expressed in placenta. Isoform 1 is expressed in keratinocytes and placenta.

The protein resides in the cell membrane. Its function is as follows. Modulates negatively TGFB1 signaling in keratinocytes. The protein is CD109 antigen (CD109) of Homo sapiens (Human).